We begin with the raw amino-acid sequence, 393 residues long: 1-deoxy-D-xylulose 5-phosphate reductoisomerase (393 aa).

NADPH contacts are provided by T10, G11, S12, I13, R37, Q38, and N124. 1-deoxy-D-xylulose 5-phosphate is bound at residue K125. E126 contributes to the NADPH binding site. D150 contacts Mn(2+). 1-deoxy-D-xylulose 5-phosphate-binding residues include S151, E152, S179, and H202. E152 is a binding site for Mn(2+). G208 is an NADPH binding site. Positions 215, 220, 221, and 224 each coordinate 1-deoxy-D-xylulose 5-phosphate. E224 contacts Mn(2+).

Belongs to the DXR family. Requires Mg(2+) as cofactor. Mn(2+) is required as a cofactor.

The catalysed reaction is 2-C-methyl-D-erythritol 4-phosphate + NADP(+) = 1-deoxy-D-xylulose 5-phosphate + NADPH + H(+). It participates in isoprenoid biosynthesis; isopentenyl diphosphate biosynthesis via DXP pathway; isopentenyl diphosphate from 1-deoxy-D-xylulose 5-phosphate: step 1/6. Functionally, catalyzes the NADPH-dependent rearrangement and reduction of 1-deoxy-D-xylulose-5-phosphate (DXP) to 2-C-methyl-D-erythritol 4-phosphate (MEP). The sequence is that of 1-deoxy-D-xylulose 5-phosphate reductoisomerase from Cupriavidus necator (strain ATCC 17699 / DSM 428 / KCTC 22496 / NCIMB 10442 / H16 / Stanier 337) (Ralstonia eutropha).